A 588-amino-acid chain; its full sequence is Sulfite reductase [NADPH] hemoprotein beta-component (588 aa).

4 residues coordinate [4Fe-4S] cluster: C443, C449, C488, and C492. C492 contributes to the siroheme binding site.

The protein belongs to the nitrite and sulfite reductase 4Fe-4S domain family. As to quaternary structure, alpha(8)-beta(8). The alpha component is a flavoprotein, the beta component is a hemoprotein. The cofactor is siroheme. [4Fe-4S] cluster is required as a cofactor.

It catalyses the reaction hydrogen sulfide + 3 NADP(+) + 3 H2O = sulfite + 3 NADPH + 4 H(+). The protein operates within sulfur metabolism; hydrogen sulfide biosynthesis; hydrogen sulfide from sulfite (NADPH route): step 1/1. Its function is as follows. Component of the sulfite reductase complex that catalyzes the 6-electron reduction of sulfite to sulfide. This is one of several activities required for the biosynthesis of L-cysteine from sulfate. In Actinobacillus succinogenes (strain ATCC 55618 / DSM 22257 / CCUG 43843 / 130Z), this protein is Sulfite reductase [NADPH] hemoprotein beta-component.